A 164-amino-acid polypeptide reads, in one-letter code: Phosphopantetheine adenylyltransferase (164 aa).

Serine 9 serves as a coordination point for substrate. ATP is bound by residues 9–10 (SF) and histidine 17. Substrate contacts are provided by lysine 41, alanine 78, and arginine 92. Residues 93 to 95 (GLR), glutamate 103, and 128 to 134 (SRPITAT) each bind ATP.

The protein belongs to the bacterial CoaD family. As to quaternary structure, homohexamer. Mg(2+) is required as a cofactor.

It is found in the cytoplasm. The catalysed reaction is (R)-4'-phosphopantetheine + ATP + H(+) = 3'-dephospho-CoA + diphosphate. Its pathway is cofactor biosynthesis; coenzyme A biosynthesis; CoA from (R)-pantothenate: step 4/5. In terms of biological role, reversibly transfers an adenylyl group from ATP to 4'-phosphopantetheine, yielding dephospho-CoA (dPCoA) and pyrophosphate. The protein is Phosphopantetheine adenylyltransferase of Allorhizobium ampelinum (strain ATCC BAA-846 / DSM 112012 / S4) (Agrobacterium vitis (strain S4)).